Reading from the N-terminus, the 229-residue chain is ATP-dependent dethiobiotin synthetase BioD (229 aa).

12 to 17 (GAGKTI) lines the ATP pocket. Thr16 provides a ligand contact to Mg(2+). Lys38 is an active-site residue. Residues Asp46, 105–108 (EGVG), and 165–166 (SE) each bind ATP. Asp46 and Glu105 together coordinate Mg(2+).

The protein belongs to the dethiobiotin synthetase family. In terms of assembly, homodimer. Mg(2+) is required as a cofactor.

It localises to the cytoplasm. The catalysed reaction is (7R,8S)-7,8-diammoniononanoate + CO2 + ATP = (4R,5S)-dethiobiotin + ADP + phosphate + 3 H(+). It catalyses the reaction (7R,8S)-8-amino-7-(carboxyamino)nonanoate + ATP = (4R,5S)-dethiobiotin + ADP + phosphate + H(+). The protein operates within cofactor biosynthesis; biotin biosynthesis; biotin from 7,8-diaminononanoate: step 1/2. Its function is as follows. Catalyzes a mechanistically unusual reaction, the ATP-dependent insertion of CO2 between the N7 and N8 nitrogen atoms of 7,8-diaminopelargonic acid (DAPA, also called 7,8-diammoniononanoate) to form a ureido ring. This cyanobacterium does not encode bioA (which catalyzes the formation of the precursor for this reaction in the cannonical pathway), instead it encodes bioU, which replaces bioA and also performs the first half of the cannonical BioD reaction. Thus in this organism BioD has a different substrate. The polypeptide is ATP-dependent dethiobiotin synthetase BioD (Gloeobacter violaceus (strain ATCC 29082 / PCC 7421)).